The following is a 217-amino-acid chain: IMPACT family member YvyE (217 aa).

It belongs to the IMPACT family.

The chain is IMPACT family member YvyE (yvyE) from Bacillus subtilis (strain 168).